A 591-amino-acid chain; its full sequence is Protein phosphatase EYA1 (591 aa).

Disordered stretches follow at residues 1–95 (MEMQ…SYPH), 150–169 (GLSQSQSPGQTGFLSYGTSF), and 239–319 (MTSS…PDSD). The span at 8–23 (SPHSRLSGSSESPSGP) shows a compositional bias: low complexity. Positions 28-53 (SHINSTSMTPNGTEVKTEPMSSSEIA) are enriched in polar residues. The segment covering 56–75 (AADGSLDSFSGSALGSSSFS) has biased composition (low complexity). The span at 78 to 87 (PAHPFSPPQI) shows a compositional bias: pro residues. Residues 240 to 252 (TSSNTSPTTPSTN) are compositionally biased toward low complexity. The span at 253-286 (ATYQLQEPPSGVTSQAVTDPTAEYSTIHSPSTPI) shows a compositional bias: polar residues. The segment covering 287–302 (KETDSERLRRGSDGKS) has biased composition (basic and acidic residues). Asp327 acts as the Nucleophile in catalysis. Residues Asp327, Asp329, and Asp555 each contribute to the Mg(2+) site. The active-site Proton donor is Asp329.

Belongs to the HAD-like hydrolase superfamily. EYA family. As to quaternary structure, probably interacts with SIX2, SIX4 and SIX5. Interacts with H2AX in response to DNA damage. Interacts with SIX3; promotes EYA1 translocation to the nucleus. Mg(2+) is required as a cofactor. In terms of processing, sumoylated with SUMO1. As to expression, extensively expressed in cranial placodes, branchial arches, CNS and developing eye and nose.

It localises to the cytoplasm. The protein resides in the nucleus. The enzyme catalyses O-phospho-L-tyrosyl-[protein] + H2O = L-tyrosyl-[protein] + phosphate. It catalyses the reaction O-phospho-L-seryl-[protein] + H2O = L-seryl-[protein] + phosphate. The catalysed reaction is O-phospho-L-threonyl-[protein] + H2O = L-threonyl-[protein] + phosphate. Functions both as protein phosphatase and as transcriptional coactivator for SIX1, and probably also for SIX2, SIX4 and SIX5. Tyrosine phosphatase that dephosphorylates 'Tyr-142' of histone H2AX (H2AXY142ph) and promotes efficient DNA repair via the recruitment of DNA repair complexes containing MDC1. 'Tyr-142' phosphorylation of histone H2AX plays a central role in DNA repair and acts as a mark that distinguishes between apoptotic and repair responses to genotoxic stress. Its function as histone phosphatase may contribute to its function in transcription regulation during organogenesis. Also has phosphatase activity with proteins phosphorylated on Ser and Thr residues (in vitro). Required for normal embryonic development of the craniofacial and trunk skeleton, kidneys and ears. Together with SIX1, it plays an important role in hypaxial muscle development; in this it is functionally redundant with EYA2. The chain is Protein phosphatase EYA1 (Eya1) from Mus musculus (Mouse).